The primary structure comprises 485 residues: Putative aldehyde dehydrogenase AldY (485 aa).

Position 231-236 (231-236) interacts with NAD(+); sequence GSTAVG. Residues E253 and C287 contribute to the active site.

Belongs to the aldehyde dehydrogenase family.

It carries out the reaction an aldehyde + NAD(+) + H2O = a carboxylate + NADH + 2 H(+). In terms of biological role, may contribute to protect cells against stress due to ethanol and related compounds. This is Putative aldehyde dehydrogenase AldY (aldY) from Bacillus subtilis (strain 168).